The chain runs to 174 residues: Calcium-binding protein F (174 aa).

4 consecutive EF-hand domains span residues 9–44, 60–83, 92–127, and 133–162; these read KIFQ…KMDG, VDMD…EAKK, AALA…NGHT, and DQVL…RRID. Residues D22, N24, D26, S28, and D33 each contribute to the Ca(2+) site. Ca(2+) is bound by residues D105, D107, D109, K111, E116, D140, D142, D144, C146, and E151.

The chain is Calcium-binding protein F (cbpF) from Dictyostelium discoideum (Social amoeba).